We begin with the raw amino-acid sequence, 445 residues long: Glutamate--tRNA ligase 2 (445 aa).

The short motif at 10–20 (PSPTGMLHVGN) is the 'HIGH' region element. The 'KMSKS' region motif lies at 240–244 (KISKR). Lys243 is an ATP binding site.

This sequence belongs to the class-I aminoacyl-tRNA synthetase family. Glutamate--tRNA ligase type 1 subfamily. In terms of assembly, monomer.

It is found in the cytoplasm. It catalyses the reaction tRNA(Glu) + L-glutamate + ATP = L-glutamyl-tRNA(Glu) + AMP + diphosphate. Catalyzes the attachment of glutamate to tRNA(Glu) in a two-step reaction: glutamate is first activated by ATP to form Glu-AMP and then transferred to the acceptor end of tRNA(Glu). In Rickettsia canadensis (strain McKiel), this protein is Glutamate--tRNA ligase 2.